We begin with the raw amino-acid sequence, 145 residues long: Ribosome maturation factor RimP (145 aa).

It belongs to the RimP family.

Its subcellular location is the cytoplasm. Its function is as follows. Required for maturation of 30S ribosomal subunits. The protein is Ribosome maturation factor RimP of Borreliella afzelii (strain PKo) (Borrelia afzelii).